A 200-amino-acid polypeptide reads, in one-letter code: Dephospho-CoA kinase (200 aa).

The DPCK domain occupies 3–200 (IFGLTGGIGS…LNVNNKCNMD (198 aa)). 11 to 16 (GSGKSL) provides a ligand contact to ATP.

It belongs to the CoaE family.

Its subcellular location is the cytoplasm. It carries out the reaction 3'-dephospho-CoA + ATP = ADP + CoA + H(+). Its pathway is cofactor biosynthesis; coenzyme A biosynthesis; CoA from (R)-pantothenate: step 5/5. Its function is as follows. Catalyzes the phosphorylation of the 3'-hydroxyl group of dephosphocoenzyme A to form coenzyme A. The polypeptide is Dephospho-CoA kinase (Ehrlichia canis (strain Jake)).